Reading from the N-terminus, the 291-residue chain is MKHSLSRFFGLGDKEHPERETEIEAEIAEHDTLKEEIQELPVDTIMPNRFQPRTIFSEEKIHELATTIHTHGIIQPIVVRPTEEEGKYELIAGERRWRAVQTLQWEKIPAIIKDFTDTETASVALIENLQREELSAIEEAHAYARLLELHDLTQEALAQRLGKGQSTVANKLRLLKLPEEVQQAILEKKISERHARSLVPLKLPELQIALLQEIIEKQLNVKQTEERVVKMLEQKTDRKPRPKRKAFSRDTRIAMNTIRQSLHMVEDSGLKINTEEEEFEEYIQLTIRIPK.

A DNA-binding region (H-T-H motif) is located at residues 155–174; sequence EALAQRLGKGQSTVANKLRL.

The protein belongs to the ParB family.

It localises to the cytoplasm. The protein localises to the nucleoid. Effects nucleoid occlusion by binding relatively nonspecifically to DNA and preventing the assembly of the division machinery in the vicinity of the nucleoid, especially under conditions that disturb the cell cycle. It helps to coordinate cell division and chromosome segregation by preventing the formation of the Z ring through the nucleoid, which would cause chromosome breakage. In Bacillus pumilus (strain SAFR-032), this protein is Nucleoid occlusion protein.